A 71-amino-acid polypeptide reads, in one-letter code: Transcription modulator YdgT (71 aa).

Belongs to the Hha/YmoA/Cnu family. In terms of assembly, forms complexes with both H-NS and StpA.

Its function is as follows. Binds to H-NS and modified the range of genes it silences; H-NS alonge silences core gene while the H-NS-Hha complex (and presumably also H-NS-YdgT) silences genes acquired by horizontal gene transfer. Plays a role silencing virulence factors in the absence of factors that induce pathogenicity. The complex formed with H-NS binds to the specific 26-bp cnb site in the origin of replication oriC. This is Transcription modulator YdgT (ydgT) from Salmonella choleraesuis (strain SC-B67).